The following is a 395-amino-acid chain: Acetate kinase 2 (395 aa).

Asn-8 is a binding site for Mg(2+). Lys-15 provides a ligand contact to ATP. Arg-89 contacts substrate. Asp-146 serves as the catalytic Proton donor/acceptor. ATP contacts are provided by residues 206–210 (HIGNG), 283–285 (DMR), and 331–335 (GVGEN). Glu-383 lines the Mg(2+) pocket.

Belongs to the acetokinase family. In terms of assembly, homodimer. It depends on Mg(2+) as a cofactor. The cofactor is Mn(2+).

It is found in the cytoplasm. The catalysed reaction is acetate + ATP = acetyl phosphate + ADP. The protein operates within metabolic intermediate biosynthesis; acetyl-CoA biosynthesis; acetyl-CoA from acetate: step 1/2. Catalyzes the formation of acetyl phosphate from acetate and ATP. Can also catalyze the reverse reaction. This is Acetate kinase 2 from Lactococcus lactis subsp. lactis (strain IL1403) (Streptococcus lactis).